The chain runs to 146 residues: Hemoglobin subunit beta-2 (146 aa).

The Globin domain occupies 2 to 146 (EWTDFERATI…VVSSLGRQYH (145 aa)). Residues histidine 63 and histidine 92 each contribute to the heme b site.

Belongs to the globin family. Hb2 is a heterotetramer of two alpha chains and two beta-2 chains. As to expression, red blood cells.

In terms of biological role, involved in oxygen transport from gills to the various peripheral tissues. This chain is Hemoglobin subunit beta-2 (hbb2), found in Pseudaphritis urvillii (Congolli).